Reading from the N-terminus, the 492-residue chain is MNNYFNKLTFIQKIKHLGQCRLMKKNEFSDGVRALLSKKIVIIGCGSQGLNQGLNMRDSGLNITYALRRDSIINQSQSYIRAMKYGFSVGTYDELIPEADFVINLIPDKYHESLIQKIEPLMKYKAVLGYSHGFHIVEIGVKIRQDITVIMVAPKCPGTEVRQEYQRGFGVPALIAVHEENNAYGTGMELAKSWACSIGSNKAGVLESSFVAEVKSDLMGEQTVLCGMLQVGSIFCFDKMVEDGLDSGYAGKLVQNGWEVITEALKQGGITLMMDRLSNVSKLRAFELSDQLKNILTPVFEKHMEDILDGSFSKNMMLDWINKDCKLLSYRQNNSQLLFEKAPVYCETILEQTYFDHGVLMVAIIKASVELAFDIMVKSGIKPESAYYESLHELPLIANTIARKRLYEMNMVISDTAEYGNYLFSDFVLPLLKKEFVPYLKRGDLDLSHVNNIVHIDNILLRDINEMIRTHPIEKVGVQLRSYMKDMVSLSF.

The region spanning 17 to 208 (LGQCRLMKKN…GSNKAGVLES (192 aa)) is the KARI N-terminal Rossmann domain. NADP(+) contacts are provided by residues 45–48 (CGSQ), Arg68, Ser76, and Ser78. His132 is an active-site residue. Gly158 provides a ligand contact to NADP(+). KARI C-terminal knotted domains follow at residues 209 to 344 (SFVA…KAPV) and 345 to 487 (YCET…MKDM). Mg(2+) contacts are provided by Asp217, Glu221, Glu389, and Glu393. A substrate-binding site is contributed by Ser414.

It belongs to the ketol-acid reductoisomerase family. It depends on Mg(2+) as a cofactor.

The catalysed reaction is (2R)-2,3-dihydroxy-3-methylbutanoate + NADP(+) = (2S)-2-acetolactate + NADPH + H(+). It carries out the reaction (2R,3R)-2,3-dihydroxy-3-methylpentanoate + NADP(+) = (S)-2-ethyl-2-hydroxy-3-oxobutanoate + NADPH + H(+). Its pathway is amino-acid biosynthesis; L-isoleucine biosynthesis; L-isoleucine from 2-oxobutanoate: step 2/4. The protein operates within amino-acid biosynthesis; L-valine biosynthesis; L-valine from pyruvate: step 2/4. Functionally, involved in the biosynthesis of branched-chain amino acids (BCAA). Catalyzes an alkyl-migration followed by a ketol-acid reduction of (S)-2-acetolactate (S2AL) to yield (R)-2,3-dihydroxy-isovalerate. In the isomerase reaction, S2AL is rearranged via a Mg-dependent methyl migration to produce 3-hydroxy-3-methyl-2-ketobutyrate (HMKB). In the reductase reaction, this 2-ketoacid undergoes a metal-dependent reduction by NADPH to yield (R)-2,3-dihydroxy-isovalerate. This is Ketol-acid reductoisomerase (NADP(+)) from Blochmanniella floridana.